The primary structure comprises 179 residues: Segregation and condensation protein B (179 aa).

The protein belongs to the ScpB family. As to quaternary structure, homodimer. Homodimerization may be required to stabilize the binding of ScpA to the Smc head domains. Component of a cohesin-like complex composed of ScpA, ScpB and the Smc homodimer, in which ScpA and ScpB bind to the head domain of Smc. The presence of the three proteins is required for the association of the complex with DNA.

It localises to the cytoplasm. Functionally, participates in chromosomal partition during cell division. May act via the formation of a condensin-like complex containing Smc and ScpA that pull DNA away from mid-cell into both cell halves. This Staphylococcus haemolyticus (strain JCSC1435) protein is Segregation and condensation protein B.